We begin with the raw amino-acid sequence, 339 residues long: tRNA N6-adenosine threonylcarbamoyltransferase (339 aa).

Positions 114 and 118 each coordinate Fe cation. Substrate is bound by residues 137-141, Asp170, Gly183, Asp187, and Asn277; that span reads VVSGG. Residue Asp305 participates in Fe cation binding.

Belongs to the KAE1 / TsaD family. Requires Fe(2+) as cofactor.

Its subcellular location is the cytoplasm. The catalysed reaction is L-threonylcarbamoyladenylate + adenosine(37) in tRNA = N(6)-L-threonylcarbamoyladenosine(37) in tRNA + AMP + H(+). Required for the formation of a threonylcarbamoyl group on adenosine at position 37 (t(6)A37) in tRNAs that read codons beginning with adenine. Is involved in the transfer of the threonylcarbamoyl moiety of threonylcarbamoyl-AMP (TC-AMP) to the N6 group of A37, together with TsaE and TsaB. TsaD likely plays a direct catalytic role in this reaction. This Clostridium beijerinckii (strain ATCC 51743 / NCIMB 8052) (Clostridium acetobutylicum) protein is tRNA N6-adenosine threonylcarbamoyltransferase.